The sequence spans 155 residues: Transcriptional regulator MraZ (155 aa).

SpoVT-AbrB domains lie at 7-63 (REQH…EPSV) and 92-135 (LDQT…EPLR).

Belongs to the MraZ family. Forms oligomers.

The protein localises to the cytoplasm. The protein resides in the nucleoid. This Chlorobaculum tepidum (strain ATCC 49652 / DSM 12025 / NBRC 103806 / TLS) (Chlorobium tepidum) protein is Transcriptional regulator MraZ.